Reading from the N-terminus, the 396-residue chain is Ribosomal RNA large subunit methyltransferase I (396 aa).

The PUA domain occupies 2–81 (SVRLVLTKGR…ETIDIAFFTR (80 aa)).

The protein belongs to the methyltransferase superfamily. RlmI family.

The protein resides in the cytoplasm. It carries out the reaction cytidine(1962) in 23S rRNA + S-adenosyl-L-methionine = 5-methylcytidine(1962) in 23S rRNA + S-adenosyl-L-homocysteine + H(+). In terms of biological role, specifically methylates the cytosine at position 1962 (m5C1962) of 23S rRNA. This Enterobacter sp. (strain 638) protein is Ribosomal RNA large subunit methyltransferase I.